A 272-amino-acid chain; its full sequence is Nitrogenase iron protein (272 aa).

ATP is bound at residue glycine 8–serine 15. Cysteine 94 contributes to the [4Fe-4S] cluster binding site. Arginine 97 is modified (ADP-ribosylarginine; by dinitrogenase reductase ADP-ribosyltransferase). Cysteine 129 contributes to the [4Fe-4S] cluster binding site.

Belongs to the NifH/BchL/ChlL family. As to quaternary structure, homodimer. [4Fe-4S] cluster serves as cofactor. Post-translationally, the reversible ADP-ribosylation of Arg-97 inactivates the nitrogenase reductase and regulates nitrogenase activity.

The enzyme catalyses N2 + 8 reduced [2Fe-2S]-[ferredoxin] + 16 ATP + 16 H2O = H2 + 8 oxidized [2Fe-2S]-[ferredoxin] + 2 NH4(+) + 16 ADP + 16 phosphate + 6 H(+). Its function is as follows. The key enzymatic reactions in nitrogen fixation are catalyzed by the nitrogenase complex, which has 2 components: the iron protein and the molybdenum-iron protein. This is Nitrogenase iron protein from Alkaliphilus metalliredigens (strain QYMF).